The sequence spans 73 residues: Translation initiation factor IF-1 (73 aa).

The S1-like domain maps to 1-73 (MAKKDGVIEI…TRGRIVYRYK (73 aa)).

This sequence belongs to the IF-1 family. As to quaternary structure, component of the 30S ribosomal translation pre-initiation complex which assembles on the 30S ribosome in the order IF-2 and IF-3, IF-1 and N-formylmethionyl-tRNA(fMet); mRNA recruitment can occur at any time during PIC assembly.

It is found in the cytoplasm. One of the essential components for the initiation of protein synthesis. Stabilizes the binding of IF-2 and IF-3 on the 30S subunit to which N-formylmethionyl-tRNA(fMet) subsequently binds. Helps modulate mRNA selection, yielding the 30S pre-initiation complex (PIC). Upon addition of the 50S ribosomal subunit IF-1, IF-2 and IF-3 are released leaving the mature 70S translation initiation complex. The chain is Translation initiation factor IF-1 from Clavibacter michiganensis subsp. michiganensis (strain NCPPB 382).